Reading from the N-terminus, the 486-residue chain is Protein nucleotidyltransferase YdiU (486 aa).

Residues glycine 89, glycine 91, arginine 92, lysine 112, aspartate 124, glycine 125, arginine 175, and arginine 182 each contribute to the ATP site. Aspartate 251 (proton acceptor) is an active-site residue. Mg(2+) contacts are provided by asparagine 252 and aspartate 261. Residue aspartate 261 participates in ATP binding.

This sequence belongs to the SELO family. Mg(2+) serves as cofactor. The cofactor is Mn(2+).

The enzyme catalyses L-seryl-[protein] + ATP = 3-O-(5'-adenylyl)-L-seryl-[protein] + diphosphate. The catalysed reaction is L-threonyl-[protein] + ATP = 3-O-(5'-adenylyl)-L-threonyl-[protein] + diphosphate. It catalyses the reaction L-tyrosyl-[protein] + ATP = O-(5'-adenylyl)-L-tyrosyl-[protein] + diphosphate. It carries out the reaction L-histidyl-[protein] + UTP = N(tele)-(5'-uridylyl)-L-histidyl-[protein] + diphosphate. The enzyme catalyses L-seryl-[protein] + UTP = O-(5'-uridylyl)-L-seryl-[protein] + diphosphate. The catalysed reaction is L-tyrosyl-[protein] + UTP = O-(5'-uridylyl)-L-tyrosyl-[protein] + diphosphate. Nucleotidyltransferase involved in the post-translational modification of proteins. It can catalyze the addition of adenosine monophosphate (AMP) or uridine monophosphate (UMP) to a protein, resulting in modifications known as AMPylation and UMPylation. The polypeptide is Protein nucleotidyltransferase YdiU (Shouchella clausii (strain KSM-K16) (Alkalihalobacillus clausii)).